The chain runs to 1937 residues: Collagen-like protein 7 (1937 aa).

N-linked (GlcNAc...) asparagine; by host glycans are attached at residues Asn6 and Asn21. Disordered regions lie at residues 88–248 (CKGN…KGDK), 294–531 (NLKG…PDLG), 583–643 (LKGD…NQGV), and 670–1144 (IKGD…DTAT). Collagen-like domains are found at residues 102–161 (GPKG…KGEK), 168–227 (GEKG…KGDI), 297–356 (GEKG…KGEK), 363–422 (GDKG…IGEK), and 453–512 (GDKG…KGDK). Positions 296–514 (KGEKGDKGNK…DKGDKGDKGD (219 aa)) are enriched in basic and acidic residues. Asn515 carries an N-linked (GlcNAc...) asparagine; by host glycan. 3 stretches are compositionally biased toward basic and acidic residues: residues 584–605 (KGDK…KGDK), 614–625 (KGEKGDKGDKGD), and 670–899 (IKGD…KGDK). Collagen-like domains are found at residues 672–731 (GDKG…KGDK), 735–854 (GNKG…KGNI), 867–926 (GLKG…KGDK), 936–995 (GIKG…KGDK), and 1023–1142 (GSKG…KGDT). An N-linked (GlcNAc...) asparagine; by host glycan is attached at Asn902. A compositionally biased stretch (basic and acidic residues) spans 907 to 1141 (YKGDKGDKGS…DKGDKGDKGD (235 aa)). Residues Asn1178, Asn1192, Asn1212, Asn1217, Asn1245, Asn1246, Asn1255, Asn1317, Asn1422, Asn1427, Asn1432, Asn1443, Asn1452, Asn1477, Asn1494, Asn1506, Asn1513, Asn1533, Asn1598, Asn1619, Asn1620, Asn1632, Asn1641, Asn1663, Asn1664, Asn1672, Asn1682, Asn1683, Asn1732, Asn1735, Asn1746, Asn1756, Asn1784, Asn1842, and Asn1934 are each glycosylated (N-linked (GlcNAc...) asparagine; by host).

May be hydroxylated on lysine by the viral-encoded procollagen-lysine,2-oxoglutarate 5-dioxygenase.

It localises to the virion. Functionally, may participate in the formation of a layer of cross-linked glycosylated fibrils at the viral surface thus giving it a hairy-like appearance. This chain is Collagen-like protein 7, found in Acanthamoeba polyphaga mimivirus (APMV).